The chain runs to 319 residues: Carbonic anhydrase 6 (319 aa).

Positions methionine 1 to alanine 14 are cleaved as a signal peptide. The 258-residue stretch at histidine 16–phenylalanine 273 folds into the Alpha-carbonic anhydrase domain. A disulfide bridge connects residues cysteine 37 and cysteine 219. An N-linked (GlcNAc...) asparagine glycan is attached at asparagine 62. Histidine 80 (proton donor/acceptor) is an active-site residue. The Zn(2+) site is built by histidine 106, histidine 108, and histidine 133. Threonine 215–threonine 216 serves as a coordination point for substrate. An N-linked (GlcNAc...) asparagine glycan is attached at asparagine 251.

Belongs to the alpha-carbonic anhydrase family. The cofactor is Zn(2+). Major constituent of saliva.

The protein resides in the secreted. The enzyme catalyses hydrogencarbonate + H(+) = CO2 + H2O. In terms of biological role, reversible hydration of carbon dioxide. Its role in saliva is unknown. This is Carbonic anhydrase 6 (CA6) from Bos taurus (Bovine).